A 464-amino-acid chain; its full sequence is Glutamate decarboxylase beta (464 aa).

K275 carries the N6-(pyridoxal phosphate)lysine modification.

Belongs to the group II decarboxylase family. Requires pyridoxal 5'-phosphate as cofactor.

The enzyme catalyses L-glutamate + H(+) = 4-aminobutanoate + CO2. Converts internalized glutamate to GABA and increases the internal pH. Involved in glutamate-dependent acid resistance in gastric fluid. This is Glutamate decarboxylase beta (gadB) from Listeria monocytogenes serovar 1/2a (strain ATCC BAA-679 / EGD-e).